Here is a 152-residue protein sequence, read N- to C-terminus: MIALIQRVKRADVRVGERVTGEIGAGLLALVCAERGDTEAAADKLLAKVLGYRVFSDAAGKMNLPVSNIDGAGRAGGLLLVSQFTLAADTNSGLRPSFTPAAPPDEGARLFDYFVAAARARHPIVETGEFGADMQVSLVNDGPVTFWLQVRP.

The Gly-cisPro motif, important for rejection of L-amino acids motif lies at 142–143 (GP).

Belongs to the DTD family. As to quaternary structure, homodimer.

The protein resides in the cytoplasm. The catalysed reaction is glycyl-tRNA(Ala) + H2O = tRNA(Ala) + glycine + H(+). It catalyses the reaction a D-aminoacyl-tRNA + H2O = a tRNA + a D-alpha-amino acid + H(+). Its function is as follows. An aminoacyl-tRNA editing enzyme that deacylates mischarged D-aminoacyl-tRNAs. Also deacylates mischarged glycyl-tRNA(Ala), protecting cells against glycine mischarging by AlaRS. Acts via tRNA-based rather than protein-based catalysis; rejects L-amino acids rather than detecting D-amino acids in the active site. By recycling D-aminoacyl-tRNA to D-amino acids and free tRNA molecules, this enzyme counteracts the toxicity associated with the formation of D-aminoacyl-tRNA entities in vivo and helps enforce protein L-homochirality. This is D-aminoacyl-tRNA deacylase from Burkholderia multivorans (strain ATCC 17616 / 249).